Here is a 346-residue protein sequence, read N- to C-terminus: NADH-quinone oxidoreductase subunit H (346 aa).

Transmembrane regions (helical) follow at residues 6 to 26, 76 to 96, 128 to 148, 166 to 186, 198 to 218, 260 to 280, 289 to 309, and 324 to 344; these read ILFW…ACAY, VMYL…WSVV, ILFL…AGWA, ISYE…SGSL, LWNI…VAMF, ITMS…PFGI, LFGL…FLWV, and LGWK…SIYI.

The protein belongs to the complex I subunit 1 family. In terms of assembly, NDH-1 is composed of 14 different subunits. Subunits NuoA, H, J, K, L, M, N constitute the membrane sector of the complex.

It localises to the cell inner membrane. The enzyme catalyses a quinone + NADH + 5 H(+)(in) = a quinol + NAD(+) + 4 H(+)(out). NDH-1 shuttles electrons from NADH, via FMN and iron-sulfur (Fe-S) centers, to quinones in the respiratory chain. The immediate electron acceptor for the enzyme in this species is believed to be ubiquinone. Couples the redox reaction to proton translocation (for every two electrons transferred, four hydrogen ions are translocated across the cytoplasmic membrane), and thus conserves the redox energy in a proton gradient. This subunit may bind ubiquinone. This Leptospira interrogans serogroup Icterohaemorrhagiae serovar copenhageni (strain Fiocruz L1-130) protein is NADH-quinone oxidoreductase subunit H.